The chain runs to 1029 residues: Collagen, type I, alpha 1b (1029 aa).

Positions 1-990 (QMSYVDHSKS…KAPDPFRGGH (990 aa)) are disordered. Residues 13-33 (PPQPGPMGPMGPRGPPGPPGS) show a composition bias toward pro residues. Residues 34–57 (SGPQGFTGPPGEPGEPGASGAMGS) are compositionally biased toward low complexity. Over residues 67–81 (NGDDGEPGKPGRPGE) the composition is skewed to basic and acidic residues. Low complexity-rich tracts occupy residues 82-91 (RGAAGPQGAR), 120-129 (VPGVMGARGR), and 136-147 (SGARGNDGNTGP). The segment covering 163-182 (PGGAGAKGETGPAGGRGNEG) has biased composition (gly residues). 3 stretches are compositionally biased toward low complexity: residues 199–223 (AGPA…AGLA), 233–267 (AQGA…PGPA), and 299–309 (ERGAPGARGFP). A compositionally biased stretch (gly residues) spans 310–322 (GADGGAGGKGAPG). Low complexity-rich tracts occupy residues 323 to 351 (ERGA…PGSK) and 429 to 465 (VGAP…QGAT). Residues 466-477 (GETGKGLGGPTG) are compositionally biased toward gly residues. The segment covering 478 to 497 (PRGAPGPAGNDGAKGEPGAA) has biased composition (low complexity). Composition is skewed to gly residues over residues 498-507 (GAPGGLGAPG) and 531-540 (GGKGGDGAPG). 2 stretches are compositionally biased toward low complexity: residues 571-580 (VAGPTGPRGA) and 593-620 (AGFA…KGDA). 2 stretches are compositionally biased toward gly residues: residues 621–630 (GAPGPGGPVG) and 645–654 (GARGGAGPPG). Low complexity-rich tracts occupy residues 655–665 (ATGFPGPAGRV), 694–722 (ETGA…PGXD), 731–743 (PQGL…LPGQ), 830–839 (APGAVGPSGK), and 855–869 (SGPA…PAGA). The segment covering 870–884 (KGDRGEAGEAGDRGG) has biased composition (basic and acidic residues). Residues 906–934 (PAGASGPAGPRGPAGSNGAPGKDGMNGLP) show a composition bias toward low complexity. The segment covering 952-967 (AGPPGPPGPAGPPGPP) has biased composition (pro residues). Residues 999 to 1029 (TQKLPLLDLAPMDVGAPDQEFGVEVGPVCFL) form the Fibrillar collagen NC1 domain.

Belongs to the fibrillar collagen family.

The protein resides in the secreted. It is found in the extracellular space. It localises to the extracellular matrix. The sequence is that of Collagen, type I, alpha 1b from Epinephelus aeneus (White grouper).